The sequence spans 586 residues: Phosphomethylpyrimidine synthase (586 aa).

The segment at 1–59 (MKQSVSAEQIELKSSLPGSKKVYVDGPREGMKVPMREIEQSDTNGVPNPPIRVYDTSGP) is disordered. Positions 22–39 (VYVDGPREGMKVPMREIE) are enriched in basic and acidic residues. Residues asparagine 193, methionine 222, tyrosine 251, histidine 287, 307 to 309 (SRG), 348 to 351 (DGLR), and glutamate 387 contribute to the substrate site. Position 391 (histidine 391) interacts with Zn(2+). A substrate-binding site is contributed by tyrosine 414. Residue histidine 455 coordinates Zn(2+). [4Fe-4S] cluster-binding residues include cysteine 535, cysteine 538, and cysteine 543.

This sequence belongs to the ThiC family. [4Fe-4S] cluster serves as cofactor.

It catalyses the reaction 5-amino-1-(5-phospho-beta-D-ribosyl)imidazole + S-adenosyl-L-methionine = 4-amino-2-methyl-5-(phosphooxymethyl)pyrimidine + CO + 5'-deoxyadenosine + formate + L-methionine + 3 H(+). It functions in the pathway cofactor biosynthesis; thiamine diphosphate biosynthesis. In terms of biological role, catalyzes the synthesis of the hydroxymethylpyrimidine phosphate (HMP-P) moiety of thiamine from aminoimidazole ribotide (AIR) in a radical S-adenosyl-L-methionine (SAM)-dependent reaction. The polypeptide is Phosphomethylpyrimidine synthase (Bacillus cereus (strain ATCC 10987 / NRS 248)).